We begin with the raw amino-acid sequence, 454 residues long: Bifunctional protein GlmU (454 aa).

Residues Met1 to Arg226 form a pyrophosphorylase region. UDP-N-acetyl-alpha-D-glucosamine-binding positions include Leu8–Gly11, Lys22, Gln73, Gly78–Thr79, Tyr100–Asp102, Gly137, Glu151, Asn166, and Asn224. Position 102 (Asp102) interacts with Mg(2+). Asn224 contributes to the Mg(2+) binding site. Residues Val227–Ala247 form a linker region. Residues Gly248 to Lys454 form an N-acetyltransferase region. UDP-N-acetyl-alpha-D-glucosamine contacts are provided by Arg330 and Lys348. Catalysis depends on His360, which acts as the Proton acceptor. The UDP-N-acetyl-alpha-D-glucosamine site is built by Tyr363 and Asn374. Acetyl-CoA-binding positions include Ala377, Asn383 to Tyr384, Ser402, Ala420, and Arg437.

The protein in the N-terminal section; belongs to the N-acetylglucosamine-1-phosphate uridyltransferase family. In the C-terminal section; belongs to the transferase hexapeptide repeat family. As to quaternary structure, homotrimer. It depends on Mg(2+) as a cofactor.

Its subcellular location is the cytoplasm. The catalysed reaction is alpha-D-glucosamine 1-phosphate + acetyl-CoA = N-acetyl-alpha-D-glucosamine 1-phosphate + CoA + H(+). It catalyses the reaction N-acetyl-alpha-D-glucosamine 1-phosphate + UTP + H(+) = UDP-N-acetyl-alpha-D-glucosamine + diphosphate. The protein operates within nucleotide-sugar biosynthesis; UDP-N-acetyl-alpha-D-glucosamine biosynthesis; N-acetyl-alpha-D-glucosamine 1-phosphate from alpha-D-glucosamine 6-phosphate (route II): step 2/2. Its pathway is nucleotide-sugar biosynthesis; UDP-N-acetyl-alpha-D-glucosamine biosynthesis; UDP-N-acetyl-alpha-D-glucosamine from N-acetyl-alpha-D-glucosamine 1-phosphate: step 1/1. It functions in the pathway bacterial outer membrane biogenesis; LPS lipid A biosynthesis. Functionally, catalyzes the last two sequential reactions in the de novo biosynthetic pathway for UDP-N-acetylglucosamine (UDP-GlcNAc). The C-terminal domain catalyzes the transfer of acetyl group from acetyl coenzyme A to glucosamine-1-phosphate (GlcN-1-P) to produce N-acetylglucosamine-1-phosphate (GlcNAc-1-P), which is converted into UDP-GlcNAc by the transfer of uridine 5-monophosphate (from uridine 5-triphosphate), a reaction catalyzed by the N-terminal domain. The chain is Bifunctional protein GlmU from Shewanella sp. (strain ANA-3).